The following is a 358-amino-acid chain: UDP-N-acetylglucosamine--N-acetylmuramyl-(pentapeptide) pyrophosphoryl-undecaprenol N-acetylglucosamine transferase (358 aa).

Residues 11-13 (TGG), Asn-120, Arg-161, Ser-188, and Gln-282 each bind UDP-N-acetyl-alpha-D-glucosamine.

Belongs to the glycosyltransferase 28 family. MurG subfamily.

Its subcellular location is the cell inner membrane. The catalysed reaction is di-trans,octa-cis-undecaprenyl diphospho-N-acetyl-alpha-D-muramoyl-L-alanyl-D-glutamyl-meso-2,6-diaminopimeloyl-D-alanyl-D-alanine + UDP-N-acetyl-alpha-D-glucosamine = di-trans,octa-cis-undecaprenyl diphospho-[N-acetyl-alpha-D-glucosaminyl-(1-&gt;4)]-N-acetyl-alpha-D-muramoyl-L-alanyl-D-glutamyl-meso-2,6-diaminopimeloyl-D-alanyl-D-alanine + UDP + H(+). It functions in the pathway cell wall biogenesis; peptidoglycan biosynthesis. Functionally, cell wall formation. Catalyzes the transfer of a GlcNAc subunit on undecaprenyl-pyrophosphoryl-MurNAc-pentapeptide (lipid intermediate I) to form undecaprenyl-pyrophosphoryl-MurNAc-(pentapeptide)GlcNAc (lipid intermediate II). The chain is UDP-N-acetylglucosamine--N-acetylmuramyl-(pentapeptide) pyrophosphoryl-undecaprenol N-acetylglucosamine transferase from Synechococcus sp. (strain CC9311).